A 193-amino-acid chain; its full sequence is Peptidyl-tRNA hydrolase (193 aa).

Tyr15 serves as a coordination point for tRNA. The active-site Proton acceptor is the His20. The tRNA site is built by Phe65, Asn67, and Asn113.

This sequence belongs to the PTH family. As to quaternary structure, monomer.

The protein localises to the cytoplasm. The enzyme catalyses an N-acyl-L-alpha-aminoacyl-tRNA + H2O = an N-acyl-L-amino acid + a tRNA + H(+). Its function is as follows. Hydrolyzes ribosome-free peptidyl-tRNAs (with 1 or more amino acids incorporated), which drop off the ribosome during protein synthesis, or as a result of ribosome stalling. Catalyzes the release of premature peptidyl moieties from peptidyl-tRNA molecules trapped in stalled 50S ribosomal subunits, and thus maintains levels of free tRNAs and 50S ribosomes. This Ehrlichia ruminantium (strain Gardel) protein is Peptidyl-tRNA hydrolase.